We begin with the raw amino-acid sequence, 77 residues long: Omega-conotoxin-like SO-5 (77 aa).

Residues 1–22 (MKLTCVMIVAVLLLTACQLITA) form the signal peptide. A propeptide spanning residues 23–42 (DDSRGTQKHRSLRSTTKVSK) is cleaved from the precursor. 3 disulfides stabilise this stretch: Cys46-Cys61, Cys53-Cys64, and Cys60-Cys71.

The protein belongs to the conotoxin O1 superfamily. In terms of tissue distribution, expressed by the venom duct.

The protein localises to the secreted. Its function is as follows. Omega-conotoxins act at presynaptic membranes, they bind and block voltage-gated calcium channels (Cav). This chain is Omega-conotoxin-like SO-5 (SO5), found in Conus striatus (Striated cone).